The sequence spans 308 residues: ADP-L-glycero-D-manno-heptose-6-epimerase (308 aa).

NADP(+) contacts are provided by residues 10 to 11 (MI), 31 to 32 (DN), lysine 38, lysine 53, 75 to 79 (EGACS), and asparagine 92. Tyrosine 140 functions as the Proton acceptor in the catalytic mechanism. Residue lysine 144 coordinates NADP(+). Position 169 (asparagine 169) interacts with substrate. Residues valine 170 and lysine 178 each coordinate NADP(+). Lysine 178 functions as the Proton acceptor in the catalytic mechanism. Substrate contacts are provided by residues serine 180, histidine 187, 201-204 (FEGS), arginine 209, and tyrosine 272.

The protein belongs to the NAD(P)-dependent epimerase/dehydratase family. HldD subfamily. As to quaternary structure, homopentamer. Requires NADP(+) as cofactor.

The catalysed reaction is ADP-D-glycero-beta-D-manno-heptose = ADP-L-glycero-beta-D-manno-heptose. The protein operates within nucleotide-sugar biosynthesis; ADP-L-glycero-beta-D-manno-heptose biosynthesis; ADP-L-glycero-beta-D-manno-heptose from D-glycero-beta-D-manno-heptose 7-phosphate: step 4/4. Catalyzes the interconversion between ADP-D-glycero-beta-D-manno-heptose and ADP-L-glycero-beta-D-manno-heptose via an epimerization at carbon 6 of the heptose. The sequence is that of ADP-L-glycero-D-manno-heptose-6-epimerase from Actinobacillus pleuropneumoniae serotype 7 (strain AP76).